A 251-amino-acid chain; its full sequence is Imidazole glycerol phosphate synthase subunit HisF (251 aa).

Active-site residues include Asp-11 and Asp-130.

Belongs to the HisA/HisF family. As to quaternary structure, heterodimer of HisH and HisF.

The protein localises to the cytoplasm. The enzyme catalyses 5-[(5-phospho-1-deoxy-D-ribulos-1-ylimino)methylamino]-1-(5-phospho-beta-D-ribosyl)imidazole-4-carboxamide + L-glutamine = D-erythro-1-(imidazol-4-yl)glycerol 3-phosphate + 5-amino-1-(5-phospho-beta-D-ribosyl)imidazole-4-carboxamide + L-glutamate + H(+). It functions in the pathway amino-acid biosynthesis; L-histidine biosynthesis; L-histidine from 5-phospho-alpha-D-ribose 1-diphosphate: step 5/9. Its function is as follows. IGPS catalyzes the conversion of PRFAR and glutamine to IGP, AICAR and glutamate. The HisF subunit catalyzes the cyclization activity that produces IGP and AICAR from PRFAR using the ammonia provided by the HisH subunit. The sequence is that of Imidazole glycerol phosphate synthase subunit HisF from Listeria monocytogenes serotype 4b (strain CLIP80459).